Consider the following 133-residue polypeptide: Small ribosomal subunit protein uS8 (133 aa).

Belongs to the universal ribosomal protein uS8 family. Part of the 30S ribosomal subunit. Contacts proteins S5 and S12.

One of the primary rRNA binding proteins, it binds directly to 16S rRNA central domain where it helps coordinate assembly of the platform of the 30S subunit. The polypeptide is Small ribosomal subunit protein uS8 (Rhodopirellula baltica (strain DSM 10527 / NCIMB 13988 / SH1)).